We begin with the raw amino-acid sequence, 230 residues long: Flagellar L-ring protein (230 aa).

A signal peptide spans 1–18; sequence MNRLNIAVSCLATALLFG. Cys-19 is lipidated: N-palmitoyl cysteine. The S-diacylglycerol cysteine moiety is linked to residue Cys-19.

Belongs to the FlgH family. The basal body constitutes a major portion of the flagellar organelle and consists of four rings (L,P,S, and M) mounted on a central rod.

The protein localises to the cell outer membrane. It is found in the bacterial flagellum basal body. Assembles around the rod to form the L-ring and probably protects the motor/basal body from shearing forces during rotation. The polypeptide is Flagellar L-ring protein (Legionella pneumophila (strain Paris)).